A 183-amino-acid chain; its full sequence is ATP-dependent protease subunit HslV (183 aa).

Thr-2 is an active-site residue. Positions 157, 160, and 163 each coordinate Na(+).

This sequence belongs to the peptidase T1B family. HslV subfamily. In terms of assembly, a double ring-shaped homohexamer of HslV is capped on each side by a ring-shaped HslU homohexamer. The assembly of the HslU/HslV complex is dependent on binding of ATP.

The protein localises to the cytoplasm. The enzyme catalyses ATP-dependent cleavage of peptide bonds with broad specificity.. Allosterically activated by HslU binding. Protease subunit of a proteasome-like degradation complex believed to be a general protein degrading machinery. This is ATP-dependent protease subunit HslV from Vibrio campbellii (strain ATCC BAA-1116).